The primary structure comprises 369 residues: Pyruvate dehydrogenase E1 component subunit alpha (369 aa).

In terms of assembly, heterodimer of an alpha and a beta chain. Thiamine diphosphate serves as cofactor.

The enzyme catalyses N(6)-[(R)-lipoyl]-L-lysyl-[protein] + pyruvate + H(+) = N(6)-[(R)-S(8)-acetyldihydrolipoyl]-L-lysyl-[protein] + CO2. Functionally, the pyruvate dehydrogenase complex catalyzes the overall conversion of pyruvate to acetyl-CoA and CO(2). It contains multiple copies of three enzymatic components: pyruvate dehydrogenase (E1), dihydrolipoamide acetyltransferase (E2) and lipoamide dehydrogenase (E3). The chain is Pyruvate dehydrogenase E1 component subunit alpha (pdhA) from Geobacillus stearothermophilus (Bacillus stearothermophilus).